We begin with the raw amino-acid sequence, 603 residues long: Adenine deaminase (603 aa).

Belongs to the metallo-dependent hydrolases superfamily. Adenine deaminase family. In terms of assembly, homodimer. It depends on Mn(2+) as a cofactor.

It catalyses the reaction adenine + H2O + H(+) = hypoxanthine + NH4(+). This is Adenine deaminase from Klebsiella pneumoniae (strain 342).